The sequence spans 86 residues: Small ribosomal subunit protein eS27y (86 aa).

Residues Cys-39 to Cys-61 form a C4-type zinc finger.

This sequence belongs to the eukaryotic ribosomal protein eS27 family. The cofactor is Zn(2+).

May be involved in the elimination of damaged mRNA after UV irradiation. The polypeptide is Small ribosomal subunit protein eS27y (RPS27B) (Arabidopsis thaliana (Mouse-ear cress)).